The following is a 130-amino-acid chain: Histone H2A type 1-C (130 aa).

The segment at 1 to 22 (MSGRGKQGGKARAKAKSRSSRA) is disordered. The residue at position 2 (Ser2) is an N-acetylserine. Ser2 bears the Phosphoserine; by RPS6KA5 mark. Arg4 carries the citrulline; alternate modification. Arg4 bears the Symmetric dimethylarginine; by PRMT5; alternate mark. Residues Lys6 and Lys10 each carry the N6-(2-hydroxyisobutyryl)lysine; alternate modification. Residue Lys6 is modified to N6-acetyllysine; alternate. Residues 7-19 (QGGKARAKAKSRS) are compositionally biased toward basic residues. 2 positions are modified to N6-(beta-hydroxybutyryl)lysine; alternate: Lys10 and Lys14. Lys10 is subject to N6-lactoyllysine; alternate. Position 10 is an N6-succinyllysine; alternate (Lys10). A Glycyl lysine isopeptide (Lys-Gly) (interchain with G-Cter in ubiquitin); alternate cross-link involves residue Lys14. Residue Lys16 forms a Glycyl lysine isopeptide (Lys-Gly) (interchain with G-Cter in ubiquitin) linkage. Lys37 carries the N6-(2-hydroxyisobutyryl)lysine; alternate modification. N6-(beta-hydroxybutyryl)lysine; alternate is present on Lys37. Position 37 is an N6-crotonyllysine; alternate (Lys37). N6-(2-hydroxyisobutyryl)lysine occurs at positions 75 and 76. An N6-(2-hydroxyisobutyryl)lysine; alternate modification is found at Lys96. Lys96 is modified (N6-(beta-hydroxybutyryl)lysine; alternate). Lys96 is modified (N6-succinyllysine; alternate). Lys96 carries the N6-glutaryllysine; alternate modification. The residue at position 105 (Gln105) is an N5-methylglutamine. Lys119 carries the post-translational modification N6-(2-hydroxyisobutyryl)lysine; alternate. Lys119 carries the post-translational modification N6-(beta-hydroxybutyryl)lysine; alternate. Residues Lys119 and Lys120 each carry the N6-crotonyllysine; alternate modification. An N6-glutaryllysine; alternate mark is found at Lys119 and Lys120. Lys120 is covalently cross-linked (Glycyl lysine isopeptide (Lys-Gly) (interchain with G-Cter in ubiquitin); alternate). Thr121 is modified (phosphothreonine; by DCAF1). Lys126 is modified (N6-crotonyllysine; alternate). Lys126 carries the N6-glutaryllysine; alternate modification.

It belongs to the histone H2A family. As to quaternary structure, the nucleosome is a histone octamer containing two molecules each of H2A, H2B, H3 and H4 assembled in one H3-H4 heterotetramer and two H2A-H2B heterodimers. The octamer wraps approximately 147 bp of DNA. Post-translationally, deiminated on Arg-4 in granulocytes upon calcium entry. In terms of processing, monoubiquitination of Lys-120 (H2AK119Ub) by RING1, TRIM37 and RNF2/RING2 complex gives a specific tag for epigenetic transcriptional repression and participates in X chromosome inactivation of female mammals. It is involved in the initiation of both imprinted and random X inactivation. Ubiquitinated H2A is enriched in inactive X chromosome chromatin. Ubiquitination of H2A functions downstream of methylation of 'Lys-27' of histone H3 (H3K27me). H2AK119Ub by RNF2/RING2 can also be induced by ultraviolet and may be involved in DNA repair. Monoubiquitination of Lys-120 (H2AK119Ub) by TRIM37 may promote transformation of cells in a number of breast cancers. Following DNA double-strand breaks (DSBs), it is ubiquitinated through 'Lys-63' linkage of ubiquitin moieties by the E2 ligase UBE2N and the E3 ligases RNF8 and RNF168, leading to the recruitment of repair proteins to sites of DNA damage. Ubiquitination at Lys-14 and Lys-16 (H2AK13Ub and H2AK15Ub, respectively) in response to DNA damage is initiated by RNF168 that mediates monoubiquitination at these 2 sites, and 'Lys-63'-linked ubiquitin are then conjugated to monoubiquitin; RNF8 is able to extend 'Lys-63'-linked ubiquitin chains in vitro. Deubiquitinated by USP51 at Lys-14 and Lys-16 (H2AK13Ub and H2AK15Ub, respectively) after damaged DNA is repaired. H2AK119Ub and ionizing radiation-induced 'Lys-63'-linked ubiquitination (H2AK13Ub and H2AK15Ub) are distinct events. Phosphorylation on Ser-2 (H2AS1ph) is enhanced during mitosis. Phosphorylation on Ser-2 by RPS6KA5/MSK1 directly represses transcription. Acetylation of H3 inhibits Ser-2 phosphorylation by RPS6KA5/MSK1. Phosphorylation at Thr-121 (H2AT120ph) by DCAF1 is present in the regulatory region of many tumor suppresor genes and down-regulates their transcription. Post-translationally, glutamine methylation at Gln-105 (H2AQ104me) by FBL is specifically dedicated to polymerase I. It is present at 35S ribosomal DNA locus and impairs binding of the FACT complex. In terms of processing, symmetric dimethylation on Arg-4 by the PRDM1/PRMT5 complex may play a crucial role in the germ-cell lineage. Crotonylation (Kcr) is specifically present in male germ cells and marks testis-specific genes in post-meiotic cells, including X-linked genes that escape sex chromosome inactivation in haploid cells. Crotonylation marks active promoters and enhancers and confers resistance to transcriptional repressors. It is also associated with post-meiotically activated genes on autosomes. Post-translationally, lactylated in macrophages by EP300/P300 by using lactoyl-CoA directly derived from endogenous or exogenous lactate, leading to stimulates gene transcription.

The protein resides in the nucleus. The protein localises to the chromosome. Functionally, core component of nucleosome. Nucleosomes wrap and compact DNA into chromatin, limiting DNA accessibility to the cellular machineries which require DNA as a template. Histones thereby play a central role in transcription regulation, DNA repair, DNA replication and chromosomal stability. DNA accessibility is regulated via a complex set of post-translational modifications of histones, also called histone code, and nucleosome remodeling. This chain is Histone H2A type 1-C, found in Homo sapiens (Human).